A 329-amino-acid chain; its full sequence is Quinone oxidoreductase (329 aa).

A2 carries the post-translational modification N-acetylalanine. K23 is subject to N6-acetyllysine. NADP(+) contacts are provided by residues Y53, 158-161, G181, H200, N229, 246-249, and 269-271; these read SGGV, VGSR, and VTV. S248 bears the Phosphoserine mark. Position 296 is an N6-succinyllysine (K296).

The protein belongs to the zinc-containing alcohol dehydrogenase family. Quinone oxidoreductase subfamily. Homotetramer.

The protein localises to the cytoplasm. It carries out the reaction 2 a quinone + NADPH + H(+) = 2 a 1,4-benzosemiquinone + NADP(+). Functionally, does not have alcohol dehydrogenase activity. Binds NADP and acts through a one-electron transfer process. Orthoquinones, such as 1,2-naphthoquinone or 9,10-phenanthrenequinone, are the best substrates (in vitro). May act in the detoxification of xenobiotics. Interacts with (AU)-rich elements (ARE) in the 3'-UTR of target mRNA species and enhances their stability. NADPH binding interferes with mRNA binding. This Pongo abelii (Sumatran orangutan) protein is Quinone oxidoreductase (CRYZ).